We begin with the raw amino-acid sequence, 87 residues long: Small ribosomal subunit protein uS17 (87 aa).

It belongs to the universal ribosomal protein uS17 family. As to quaternary structure, part of the 30S ribosomal subunit.

In terms of biological role, one of the primary rRNA binding proteins, it binds specifically to the 5'-end of 16S ribosomal RNA. The sequence is that of Small ribosomal subunit protein uS17 from Geobacillus thermodenitrificans (strain NG80-2).